Consider the following 182-residue polypeptide: UPF0301 protein NGK_1355 (182 aa).

The protein belongs to the UPF0301 (AlgH) family.

The chain is UPF0301 protein NGK_1355 from Neisseria gonorrhoeae (strain NCCP11945).